The following is a 456-amino-acid chain: Acetylcholine receptor subunit alpha (456 aa).

Positions 1–20 (MNYFILILPILPYLYGPAVC) are cleaved as a signal peptide. Over 21 to 230 (SEDETRLVKT…ITYHFLLLRL (210 aa)) the chain is Extracellular. Intrachain disulfides connect cysteine 148/cysteine 162 and cysteine 212/cysteine 213. N-linked (GlcNAc...) asparagine glycosylation is present at asparagine 161. A run of 3 helical transmembrane segments spans residues 231–255 (PLYF…VFYL), 263–281 (MTLS…LVIV), and 297–316 (YMLF…VIVI). The Cytoplasmic segment spans residues 317-428 (NTHHRSPSTH…WKFVAMVLDH (112 aa)). Residues 429–447 (ILLCVFMAVCIIGTLGVFA) form a helical membrane-spanning segment.

It belongs to the ligand-gated ion channel (TC 1.A.9) family. Acetylcholine receptor (TC 1.A.9.1) subfamily. Alpha-1/CHRNA1 sub-subfamily. In terms of assembly, one of the alpha chains that assemble within the acetylcholine receptor, a pentamer of two alpha chains, a beta, a delta, and a gamma or epsilon chains.

The protein resides in the postsynaptic cell membrane. It is found in the cell membrane. It carries out the reaction K(+)(in) = K(+)(out). The enzyme catalyses Na(+)(in) = Na(+)(out). Upon acetylcholine binding, the AChR responds by an extensive change in conformation that affects all subunits and leads to opening of an ion-conducting channel across the plasma membrane. This Danio rerio (Zebrafish) protein is Acetylcholine receptor subunit alpha (chrna1).